The sequence spans 120 residues: Small ribosomal subunit protein bS6 (120 aa).

The segment at 93–120 (KKADTAPSSMMKTVEREEARKASQTEQA) is disordered. The span at 105–120 (TVEREEARKASQTEQA) shows a compositional bias: basic and acidic residues.

It belongs to the bacterial ribosomal protein bS6 family.

In terms of biological role, binds together with bS18 to 16S ribosomal RNA. In Delftia acidovorans (strain DSM 14801 / SPH-1), this protein is Small ribosomal subunit protein bS6.